Reading from the N-terminus, the 622-residue chain is Glutamyl-tRNA(Gln) amidotransferase subunit B, mitochondrial (622 aa).

Residues 1–54 (MSRIPTRELGRYLLQGQICQRGCVASSVSKSRAKQLGRHPLLPHDRHQPTQARH) constitute a mitochondrion transit peptide. The interval 30–67 (KSRAKQLGRHPLLPHDRHQPTQARHAHTVTTTATPTQL) is disordered. The segment covering 57-67 (TVTTTATPTQL) has biased composition (low complexity).

It belongs to the GatB/GatE family. GatB subfamily. As to quaternary structure, subunit of the heterotrimeric GatCAB amidotransferase (AdT) complex, composed of A, B and C subunits.

The protein localises to the mitochondrion. The enzyme catalyses L-glutamyl-tRNA(Gln) + L-glutamine + ATP + H2O = L-glutaminyl-tRNA(Gln) + L-glutamate + ADP + phosphate + H(+). Allows the formation of correctly charged Gln-tRNA(Gln) through the transamidation of misacylated Glu-tRNA(Gln) in the mitochondria. The reaction takes place in the presence of glutamine and ATP through an activated gamma-phospho-Glu-tRNA(Gln). In Verticillium alfalfae (strain VaMs.102 / ATCC MYA-4576 / FGSC 10136) (Verticillium wilt of alfalfa), this protein is Glutamyl-tRNA(Gln) amidotransferase subunit B, mitochondrial.